The chain runs to 350 residues: E3 ubiquitin-protein ligase TRIM63 (350 aa).

The RING-type zinc-finger motif lies at 23–79; it reads CPICLEMFTKPVVILPCQHNLCRKCANDIFQAANPYWTNRGGSVSMSGGRFRCPSCR. Residues 74 to 218 are interaction with TTN; it reads RCPSCRHEVI…LSQKFDTLYA (145 aa). The segment at 117 to 159 adopts a B box-type zinc-finger fold; the sequence is GSHPMCKEHEDEKINIYCLTCEVPTCSLCKVFGAHQACEVAPL. Residues Cys122, His125, Cys145, and His151 each coordinate Zn(2+). Positions 207–269 form a coiled coil; sequence EELSQKFDTL…VETAIQSLDE (63 aa). Positions 267 to 325 constitute a COS domain; it reads LDEPGGATFLSSAKQLIKSNVEASKGCQLGKTEQGFENMDYFTLDLEHIAEALRAIDFG. Positions 325–344 are enriched in acidic residues; the sequence is GTDEEEEEFTEEEADEEEGV. The tract at residues 325–350 is disordered; the sequence is GTDEEEEEFTEEEADEEEGVTTEGHQ.

Homodimer. Homooligomer and heterooligomer. Interacts with SUMO2, titin/TTN and GMEB1. Interacts with TRIM54 and probably with TRIM55. Interacts with TNNI3. Forms a ternary complex with RACK1 and PRKCE. Interacts with CKM.

Its subcellular location is the cytoplasm. It localises to the nucleus. It is found in the myofibril. The protein localises to the sarcomere. The protein resides in the m line. Its subcellular location is the z line. It catalyses the reaction S-ubiquitinyl-[E2 ubiquitin-conjugating enzyme]-L-cysteine + [acceptor protein]-L-lysine = [E2 ubiquitin-conjugating enzyme]-L-cysteine + N(6)-ubiquitinyl-[acceptor protein]-L-lysine.. It functions in the pathway protein modification; protein ubiquitination. Its function is as follows. E3 ubiquitin ligase. Mediates the ubiquitination and subsequent proteasomal degradation of CKM, GMEB1 and HIBADH. Regulates the proteasomal degradation of muscle proteins under amino acid starvation, where muscle protein is catabolized to provide other organs with amino acids. Inhibits de novo skeletal muscle protein synthesis under amino acid starvation. Regulates proteasomal degradation of cardiac troponin I/TNNI3 and probably of other sarcomeric-associated proteins. May play a role in striated muscle atrophy and hypertrophy by regulating an anti-hypertrophic PKC-mediated signaling pathway. May regulate the organization of myofibrils through TTN in muscle cells. The polypeptide is E3 ubiquitin-protein ligase TRIM63 (Trim63) (Mus musculus (Mouse)).